The chain runs to 362 residues: Protein Wnt-16 (362 aa).

Positions 1–29 are cleaved as a signal peptide; it reads MDRAALLGLSRLCALWAAVLALFPCGAQG. 3 disulfide bridges follow: Cys-81–Cys-92, Cys-136–Cys-144, and Cys-146–Cys-165. N-linked (GlcNAc...) asparagine glycosylation is present at Asn-140. Residue Asn-186 is glycosylated (N-linked (GlcNAc...) asparagine). 8 disulfides stabilise this stretch: Cys-218–Cys-232, Cys-220–Cys-227, Cys-291–Cys-322, Cys-307–Cys-317, Cys-321–Cys-361, Cys-337–Cys-352, Cys-339–Cys-349, and Cys-344–Cys-345. The O-palmitoleoyl serine; by PORCN moiety is linked to residue Ser-224. N-linked (GlcNAc...) asparagine glycosylation occurs at Asn-308.

It belongs to the Wnt family. Post-translationally, palmitoleoylation is required for efficient binding to frizzled receptors. Depalmitoleoylation leads to Wnt signaling pathway inhibition.

It localises to the secreted. It is found in the extracellular space. The protein resides in the extracellular matrix. Ligand for members of the frizzled family of seven transmembrane receptors. Probable developmental protein. May be a signaling molecule which affects the development of discrete regions of tissues. Is likely to signal over only few cell diameters. The chain is Protein Wnt-16 (WNT16) from Bos taurus (Bovine).